The following is a 561-amino-acid chain: MKELLYMELAEVYHRLESTTKRLEKTEILAELLRSVDKELLPDVTILMLGRVFPIWSEEELGVGIKLLMKAISLVVGVSMDEIEDEIREQGDIGLASEKLFSRKTQTTFFSQPLTVEFVYSRLKALASASGDRAQSKKINILVEVLSQAKPLEARYITRTVLEELRVGVAEGIIRDAIARAFEVDPALVERAHMLTNDLGMVAAVAREEGEPGLGRLNLEPGRPVKPMLAQLASSIESAITELGRAFCETKYDGIRVQIHRCGDEISIFTRRLENITAAVPEILEGVEEALPADDYIVEGEIIVTMDGRPASFQYILQRVRRKYDVERLTREVPLSLFLFDVLYHREPLIDEPLRHRREVLESILSEIPGRVEASRMVDVGPDNLNDALWLFEESIREGHEGIMIKDTEAPYIPGIRGKKMLKFKAEPETLDLIVVGGTYGRGKRAHLVGSYLLAARDEDSGDLVTVAHVATGLDDETLQQLSERMEKLAIERKGRKLLVRPEIILEVAYSEIVKSPEYESGYSLRFPVVKRIRDDLCLDDVDTVGRIESLFQSGQPDQPG.

Glu249 contacts ATP. The N6-AMP-lysine intermediate role is filled by Lys251. Residues Arg256, Arg271, Glu301, Phe340, Arg417, and Lys423 each coordinate ATP.

Belongs to the ATP-dependent DNA ligase family. It depends on Mg(2+) as a cofactor.

The enzyme catalyses ATP + (deoxyribonucleotide)n-3'-hydroxyl + 5'-phospho-(deoxyribonucleotide)m = (deoxyribonucleotide)n+m + AMP + diphosphate.. DNA ligase that seals nicks in double-stranded DNA during DNA replication, DNA recombination and DNA repair. The polypeptide is DNA ligase (Methanothermobacter thermautotrophicus (strain ATCC 29096 / DSM 1053 / JCM 10044 / NBRC 100330 / Delta H) (Methanobacterium thermoautotrophicum)).